Here is a 193-residue protein sequence, read N- to C-terminus: Potassium-transporting ATPase KdpC subunit (193 aa).

The helical transmembrane segment at 7 to 27 threads the bilayer; it reads PLVVLFVILTAVTGLAYPAVM.

It belongs to the KdpC family. In terms of assembly, the system is composed of three essential subunits: KdpA, KdpB and KdpC.

It is found in the cell inner membrane. In terms of biological role, part of the high-affinity ATP-driven potassium transport (or Kdp) system, which catalyzes the hydrolysis of ATP coupled with the electrogenic transport of potassium into the cytoplasm. This subunit acts as a catalytic chaperone that increases the ATP-binding affinity of the ATP-hydrolyzing subunit KdpB by the formation of a transient KdpB/KdpC/ATP ternary complex. The protein is Potassium-transporting ATPase KdpC subunit of Burkholderia cenocepacia (strain ATCC BAA-245 / DSM 16553 / LMG 16656 / NCTC 13227 / J2315 / CF5610) (Burkholderia cepacia (strain J2315)).